Reading from the N-terminus, the 169-residue chain is Cell cycle link protein (169 aa).

Residues Leu-9–Leu-22 form a binding to host SKP1 protein region. An LXCXE motif, interaction with host RBR motif is present at residues Leu-110–Glu-114.

This sequence belongs to the nanovirus Clink protein family. As to quaternary structure, interacts with host SKP1. Interacts (via LXCXE domain) with host retinoblastoma-related protein 1 (RBR1). Interacts (via LXCXE domain) with retinoblastoma-related proteins (RBR).

Functionally, interacts with and disrupts the function of host retinoblastoma-related proteins RBR, which are key regulators of the cell cycle. Induces transcriptional activation of E2F-regulated S-phase and G2/M-phase-specific genes. Inactivation of the ability of RBR to arrest the cell cycle leads to the stimulation of viral DNA replication. The sequence is that of Cell cycle link protein (DNA-C) from Faba bean necrotic yellows virus (isolate Egyptian EV1-93) (FBNYV).